The sequence spans 277 residues: DNA polymerase epsilon subunit C (277 aa).

Composition is skewed to polar residues over residues 1 to 16 and 24 to 39; these read MSSPMPQSSLNNSQVA and ETPSTTPPMISNTNTP. Residues 1–91 form a disordered region; it reads MSSPMPQSSL…EEEEEEESLS (91 aa). The segment covering 69-89 has biased composition (acidic residues); it reads ENEDDDEQEEEEEEEEEEEES.

In terms of assembly, heterotetramer. Consists of four subunits: POL2, DPB2, DPB3 and DPB4.

It is found in the nucleus. Functionally, as accessory component of the DNA polymerase epsilon (DNA polymerase II) participates in chromosomal DNA replication. The chain is DNA polymerase epsilon subunit C (DPB3) from Debaryomyces hansenii (strain ATCC 36239 / CBS 767 / BCRC 21394 / JCM 1990 / NBRC 0083 / IGC 2968) (Yeast).